Reading from the N-terminus, the 261-residue chain is Cytochrome c oxidase subunit 3 (261 aa).

The Mitochondrial matrix portion of the chain corresponds to 1–15; sequence MAHQAHSYHMVDPSP. Residues 16 to 34 form a helical membrane-spanning segment; it reads WPIFGATAALLTTSGLIMW. Residues 35–40 are Mitochondrial intermembrane-facing; it reads FHYNSL. Residues 41–66 form a helical membrane-spanning segment; sequence YLLTLGLLSMFLVMIQWWRDIVREST. The Mitochondrial matrix segment spans residues 67 to 72; that stretch reads FQGHHT. A helical transmembrane segment spans residues 73-105; sequence PTVQKGLRYGMILFITSEAFFFLGFFWAFFHSS. Residues 106-128 are Mitochondrial intermembrane-facing; it reads LAPTPELGAQWPPTGINPLNPLE. A helical transmembrane segment spans residues 129 to 152; sequence VPLLNTAILLASGVTVTWAHHSIT. Topologically, residues 153–155 are mitochondrial matrix; the sequence is ESN. The chain crosses the membrane as a helical span at residues 156-183; that stretch reads RKQAIHALSLTIILGFYFTALQAMEYHE. The Mitochondrial intermembrane segment spans residues 184–190; it reads ASFSIAD. The helical transmembrane segment at 191–223 threads the bilayer; it reads GVYGSTFFVATGFHGLHVIIGSSFLTVCLLRLI. The Mitochondrial matrix segment spans residues 224–232; sequence KFHFTTNHH. Residues 233–256 traverse the membrane as a helical segment; that stretch reads FGFEAAAWYWHFVDVIWLFLYMSI. Over 257 to 261 the chain is Mitochondrial intermembrane; sequence YWWGS.

Belongs to the cytochrome c oxidase subunit 3 family. Component of the cytochrome c oxidase (complex IV, CIV), a multisubunit enzyme composed of 14 subunits. The complex is composed of a catalytic core of 3 subunits MT-CO1, MT-CO2 and MT-CO3, encoded in the mitochondrial DNA, and 11 supernumerary subunits COX4I, COX5A, COX5B, COX6A, COX6B, COX6C, COX7A, COX7B, COX7C, COX8 and NDUFA4, which are encoded in the nuclear genome. The complex exists as a monomer or a dimer and forms supercomplexes (SCs) in the inner mitochondrial membrane with NADH-ubiquinone oxidoreductase (complex I, CI) and ubiquinol-cytochrome c oxidoreductase (cytochrome b-c1 complex, complex III, CIII), resulting in different assemblies (supercomplex SCI(1)III(2)IV(1) and megacomplex MCI(2)III(2)IV(2)).

It localises to the mitochondrion inner membrane. The catalysed reaction is 4 Fe(II)-[cytochrome c] + O2 + 8 H(+)(in) = 4 Fe(III)-[cytochrome c] + 2 H2O + 4 H(+)(out). Component of the cytochrome c oxidase, the last enzyme in the mitochondrial electron transport chain which drives oxidative phosphorylation. The respiratory chain contains 3 multisubunit complexes succinate dehydrogenase (complex II, CII), ubiquinol-cytochrome c oxidoreductase (cytochrome b-c1 complex, complex III, CIII) and cytochrome c oxidase (complex IV, CIV), that cooperate to transfer electrons derived from NADH and succinate to molecular oxygen, creating an electrochemical gradient over the inner membrane that drives transmembrane transport and the ATP synthase. Cytochrome c oxidase is the component of the respiratory chain that catalyzes the reduction of oxygen to water. Electrons originating from reduced cytochrome c in the intermembrane space (IMS) are transferred via the dinuclear copper A center (CU(A)) of subunit 2 and heme A of subunit 1 to the active site in subunit 1, a binuclear center (BNC) formed by heme A3 and copper B (CU(B)). The BNC reduces molecular oxygen to 2 water molecules using 4 electrons from cytochrome c in the IMS and 4 protons from the mitochondrial matrix. The sequence is that of Cytochrome c oxidase subunit 3 (MT-CO3) from Struthio camelus (Common ostrich).